The primary structure comprises 125 residues: UPF0102 protein Mpop_0474 (125 aa).

The protein belongs to the UPF0102 family.

The sequence is that of UPF0102 protein Mpop_0474 from Methylorubrum populi (strain ATCC BAA-705 / NCIMB 13946 / BJ001) (Methylobacterium populi).